The primary structure comprises 269 residues: Ribosomal RNA small subunit methyltransferase A (269 aa).

S-adenosyl-L-methionine-binding residues include His11, Leu13, Gly38, Glu59, Asp84, and Asn105.

It belongs to the class I-like SAM-binding methyltransferase superfamily. rRNA adenine N(6)-methyltransferase family. RsmA subfamily.

It localises to the cytoplasm. It carries out the reaction adenosine(1518)/adenosine(1519) in 16S rRNA + 4 S-adenosyl-L-methionine = N(6)-dimethyladenosine(1518)/N(6)-dimethyladenosine(1519) in 16S rRNA + 4 S-adenosyl-L-homocysteine + 4 H(+). Specifically dimethylates two adjacent adenosines (A1518 and A1519) in the loop of a conserved hairpin near the 3'-end of 16S rRNA in the 30S particle. May play a critical role in biogenesis of 30S subunits. The sequence is that of Ribosomal RNA small subunit methyltransferase A from Acaryochloris marina (strain MBIC 11017).